Here is a 71-residue protein sequence, read N- to C-terminus: Phosphatidylinositol N-acetylglucosaminyltransferase subunit Y (71 aa).

The Cytoplasmic segment spans residues 1 to 5 (MIRSL). The helical transmembrane segment at 6 to 26 (PTMTVLIPLVSLAGLLYSASV) threads the bilayer. Over 27 to 44 (EEGFPEGCTSASSLCFYS) the chain is Lumenal. A helical transmembrane segment spans residues 45-65 (LLLPVTVPVYVFFHLWTWMGL). Topologically, residues 66 to 71 (KLFRHN) are cytoplasmic.

In terms of assembly, component of the glycosylphosphatidylinositol-N-acetylglucosaminyltransferase (GPI-GnT) complex composed at least by PIGA, PIGC, PIGH, PIGP, PIGQ, PIGY and DPM2. Interacts directly with PIGA; this interaction regulates glycosylphosphatidylinositol-N-acetylglucosaminyltransferase activity. Does not interact with Ras proteins.

The protein resides in the endoplasmic reticulum membrane. Its pathway is glycolipid biosynthesis; glycosylphosphatidylinositol-anchor biosynthesis. In terms of biological role, part of the glycosylphosphatidylinositol-N-acetylglucosaminyltransferase (GPI-GnT) complex that catalyzes the transfer of N-acetylglucosamine from UDP-N-acetylglucosamine to phosphatidylinositol and participates in the first step of GPI biosynthesis. May act by regulating the catalytic subunit PIGA. The polypeptide is Phosphatidylinositol N-acetylglucosaminyltransferase subunit Y (Mus musculus (Mouse)).